Consider the following 908-residue polypeptide: Low affinity vacuolar monovalent cation/H(+) antiporter (908 aa).

The segment covering 1 to 15 (MAKNNHISASGNSTS) has biased composition (polar residues). Residues 1-20 (MAKNNHISASGNSTSGDHRL) form a disordered region. Residues 1–244 (MAKNNHISAS…WEVTCSNVLW (244 aa)) lie on the Cytoplasmic side of the membrane. Position 26 is a phosphothreonine (threonine 26). The residue at position 32 (serine 32) is a Phosphoserine. Threonine 33 is modified (phosphothreonine). A disordered region spans residues 68-147 (NKSKRSVSSQ…DDEDANDDSR (80 aa)). Over residues 73–87 (SVSSQSPIVHSSNNT) the composition is skewed to low complexity. Over residues 102–121 (ESLSSKSHSVPDLNTATPSS) the composition is skewed to polar residues. Serine 110 is modified (phosphoserine). Threonine 118 carries the post-translational modification Phosphothreonine. At serine 121 the chain carries Phosphoserine. A helical transmembrane segment spans residues 245 to 265 (FILFGFPIAILFYSAAIVVFL). Over 266–408 (LGGGGLVTNS…GRVLFYTIFH (143 aa)) the chain is Vacuolar. Asparagine 361 carries N-linked (GlcNAc...) asparagine glycosylation. The chain crosses the membrane as a helical span at residues 409 to 429 (LVLQPILAVLSLCLWLLVFTI). At 430–494 (PMSNVLWQIM…HYYKYTVDGT (65 aa)) the chain is on the cytoplasmic side. The chain crosses the membrane as a helical span at residues 495-515 (NVIVVNLISIVFFTIFDFYVL). The Vacuolar segment spans residues 516-530 (KNFLHWKTWFTYESS). The chain crosses the membrane as a helical span at residues 531 to 551 (IFILCLTSTIPLAFYIGQAVA). Residues 552 to 560 (SISAQTSMG) are Cytoplasmic-facing. A helical transmembrane segment spans residues 561 to 581 (VGAVINAFFSTIVEIFLYCVA). Residues 582-587 (LQQKKG) lie on the Vacuolar side of the membrane. Residues 588–608 (LLVEGSMIGSILGAVLLLPGL) form a helical membrane-spanning segment. Residues 609-626 (SMCGGALNRKTQRYNPAS) are Cytoplasmic-facing. A helical transmembrane segment spans residues 627–647 (AGVSSALLIFSMIVMFVPTVL). Residues 648–686 (YEIYGGYSVNCADGANDRDCTFSHPPLKFNRLFTHVIQP) are Vacuolar-facing. Residues 687–707 (MSISCAIVLFCAYIIGLWFTL) traverse the membrane as a helical segment. At 708-746 (RTHAKMIWQLPIADPTSTAPEQQEQNSHDAPNWSRSKST) the chain is on the cytoplasmic side. A helical transmembrane segment spans residues 747–767 (CILLMSTLLYAIIAEILVSCV). Over 768 to 783 (DAVLEDIPSLNPKFLG) the chain is Vacuolar. The chain crosses the membrane as a helical span at residues 784-804 (LTIFALIPNTTEFLNAISFAI). Topologically, residues 805–816 (HGNVALSMEIGS) are cytoplasmic. The chain crosses the membrane as a helical span at residues 817–837 (AYALQVCLLQIPSLVIYSIFY). The Vacuolar segment spans residues 838 to 851 (TWNVKKSMINIRTQ). Residues 852-872 (MFPLVFPRWDIFGAMTSVFMF) form a helical membrane-spanning segment. Residues 873 to 885 (TYLYAEGKSNYFK) are Cytoplasmic-facing. The chain crosses the membrane as a helical span at residues 886 to 906 (GSMLILLYIIIVVGFYFQGAL). Over 907–908 (SE) the chain is Vacuolar.

The protein belongs to the Ca(2+):cation antiporter (CaCA) (TC 2.A.19) family.

The protein localises to the vacuole membrane. Functionally, has a role in promoting intracellular monovalent cation sequestration via the exchange of monovalent cations and especially Na(+) for hydrogen ions across the vacuolar membrane. The polypeptide is Low affinity vacuolar monovalent cation/H(+) antiporter (VNX1) (Saccharomyces cerevisiae (strain ATCC 204508 / S288c) (Baker's yeast)).